The chain runs to 192 residues: MDTSRLTLDHFLSRFQLLRPQMTHKTLNQRQAAVLIPVVRRPQPGLLLTQRAIHLRKHAGQVAFPGGAVDSTDASLIAAALREAQEEVAIPPQAVEVIGVLPPVDSVTGFQVTPVVGIIPPNLPWRASEDEVSAVFEMPLAQALQLGRYHPLDVYRRGNSHRVWLSWYEHYFVWGMTANILRELALQIGVKP.

Positions 29-160 constitute a Nudix hydrolase domain; that stretch reads QRQAAVLIPV…PLDVYRRGNS (132 aa). Positions 67-89 match the Nudix box motif; that stretch reads GAVDSTDASLIAAALREAQEEVA. Mg(2+) contacts are provided by E83 and E87.

Belongs to the Nudix hydrolase family. PCD1 subfamily. The cofactor is Mn(2+). It depends on Mg(2+) as a cofactor.

Functionally, probably mediates the hydrolysis of some nucleoside diphosphate derivatives. This is an uncharacterized protein from Salmonella dublin (strain CT_02021853).